The primary structure comprises 22 residues: Unknown protein 10 (22 aa).

The protein is Unknown protein 10 of Pseudotsuga menziesii (Douglas-fir).